The following is a 364-amino-acid chain: Succinyl-diaminopimelate desuccinylase (364 aa).

Zn(2+) is bound at residue histidine 66. The active site involves aspartate 68. Residue aspartate 97 participates in Zn(2+) binding. Glutamate 127 serves as the catalytic Proton acceptor. Zn(2+)-binding residues include glutamate 128, glutamate 156, and histidine 341.

This sequence belongs to the peptidase M20A family. DapE subfamily. In terms of assembly, homodimer. Zn(2+) serves as cofactor. The cofactor is Co(2+).

The enzyme catalyses N-succinyl-(2S,6S)-2,6-diaminopimelate + H2O = (2S,6S)-2,6-diaminopimelate + succinate. The protein operates within amino-acid biosynthesis; L-lysine biosynthesis via DAP pathway; LL-2,6-diaminopimelate from (S)-tetrahydrodipicolinate (succinylase route): step 3/3. Functionally, catalyzes the hydrolysis of N-succinyl-L,L-diaminopimelic acid (SDAP), forming succinate and LL-2,6-diaminopimelate (DAP), an intermediate involved in the bacterial biosynthesis of lysine and meso-diaminopimelic acid, an essential component of bacterial cell walls. The chain is Succinyl-diaminopimelate desuccinylase from Wolinella succinogenes (strain ATCC 29543 / DSM 1740 / CCUG 13145 / JCM 31913 / LMG 7466 / NCTC 11488 / FDC 602W) (Vibrio succinogenes).